Consider the following 266-residue polypeptide: GTP cyclohydrolase FolE2 (266 aa).

The protein belongs to the GTP cyclohydrolase IV family.

It carries out the reaction GTP + H2O = 7,8-dihydroneopterin 3'-triphosphate + formate + H(+). It participates in cofactor biosynthesis; 7,8-dihydroneopterin triphosphate biosynthesis; 7,8-dihydroneopterin triphosphate from GTP: step 1/1. Its function is as follows. Converts GTP to 7,8-dihydroneopterin triphosphate. The chain is GTP cyclohydrolase FolE2 from Methylobacillus flagellatus (strain ATCC 51484 / DSM 6875 / VKM B-1610 / KT).